An 89-amino-acid polypeptide reads, in one-letter code: UPF0335 protein RPC_3979 (89 aa).

This sequence belongs to the UPF0335 family.

The protein is UPF0335 protein RPC_3979 of Rhodopseudomonas palustris (strain BisB18).